Consider the following 1313-residue polypeptide: Ataxin-2 (1313 aa).

Residues 1-12 are compositionally biased toward low complexity; it reads MRSAAAAPRSPA. Residues 1–255 are disordered; sequence MRSAAAAPRS…RNSNKGLPQS (255 aa). Pro residues predominate over residues 48 to 65; it reads GPYPSAAPPPPGPGPPPS. Composition is skewed to low complexity over residues 104 to 114, 141 to 154, 166 to 187, and 204 to 234; these read FVVLLLPLASP, ARPAPGCPRPACEP, QQQQQQQQQQQQQQQQQQQQQQ, and LLASPAAAPSPSSSSVSSSSATAPSSVVAAT. Residues 235-244 show a composition bias toward gly residues; that stretch reads SGGGRPGLGR. A Phosphoserine modification is found at Ser-248. The region spanning 267–344 is the Sm domain; sequence RMVHILTSVV…FVVVQFKDMD (78 aa). Ser-393, Ser-466, Ser-478, Ser-508, and Ser-554 each carry phosphoserine. Basic and acidic residues-rich tracts occupy residues 459–471 and 478–492; these read ALENDDRSEEEKY and SSEREGHSINTRENK. Disordered regions lie at residues 459–954 and 1137–1219; these read ALEN…HQQP and NATL…NSFP. A compositionally biased stretch (polar residues) spans 508 to 544; it reads SGRQNSPRMGQPGSGSMPSRSTSHTSDFNPNSGSDQR. The span at 552 to 562 shows a compositional bias: pro residues; sequence WPSPCPSPSSR. The segment covering 563 to 581 has biased composition (low complexity); the sequence is PPSRYQSGPNSLPPRAATP. A compositionally biased stretch (pro residues) spans 582-598; it reads TRPPSRPPSRPSRPPSH. Ser-624 is subject to Phosphoserine. The segment covering 627 to 637 has biased composition (basic residues); that stretch reads AQRHPRNHRVS. The residue at position 640 (Arg-640) is an Asymmetric dimethylarginine; alternate. Omega-N-methylarginine; alternate is present on Arg-640. The residue at position 642 (Ser-642) is a Phosphoserine. Residues 666–681 are compositionally biased toward low complexity; sequence TSPSGGTWSSVVSGVP. Ser-684 is subject to Phosphoserine. Polar residues predominate over residues 693–703; it reads PRQNSIGNTPS. Ser-728 carries the post-translational modification Phosphoserine. Thr-741 is modified (phosphothreonine). The span at 768–777 shows a compositional bias: polar residues; it reads PNETSPSFSK. A phosphoserine mark is found at Ser-772 and Ser-784. Residues 788-804 show a composition bias toward basic and acidic residues; it reads SEHRKQIDDLKKFKNDF. Positions 807–820 are enriched in polar residues; it reads QPSSTSESMDQLLN. Basic and acidic residues predominate over residues 821-844; that stretch reads KNREGEKSRDLIKDKIEPSAKDSF. Positions 847 to 871 are enriched in low complexity; sequence NSSSNCTSGSSKPNSPSISPSILSN. Residues Ser-856, Ser-857, Ser-861, Ser-865, Ser-867, Ser-888, and Ser-889 each carry the phosphoserine modification. Positions 880–891 are enriched in polar residues; sequence VTSQGVQTSSPA. A Glycyl lysine isopeptide (Lys-Gly) (interchain with G-Cter in SUMO2) cross-link involves residue Lys-893. Basic and acidic residues predominate over residues 893–910; that stretch reads KQEKDDKEEKKDAAEQVR. 2 stretches are compositionally biased toward low complexity: residues 925-936 and 1155-1192; these read SFSQPKPSTTPT and GQQQSQHGGSHPAPSPVQHHQHQAAQALHLASPQQQSA. The segment covering 1206–1219 has biased composition (polar residues); sequence TPASNTQSPQNSFP.

The protein belongs to the ataxin-2 family. In terms of assembly, monomer. Can also form homodimers. Interacts with TARDBP; the interaction is RNA-dependent. Interacts with RBFOX1. Interacts with polyribosomes. Interacts with SH3GL2 and SH3GL3. Interacts with SH3KBP1 and CBL. Interacts with EGFR. Interacts with ATXN2L. Expressed in the brain, heart, liver, skeletal muscle, pancreas and placenta. Isoform 1 is predominant in the brain and spinal cord. Isoform 4 is more abundant in the cerebellum. In the brain, broadly expressed in the amygdala, caudate nucleus, corpus callosum, hippocampus, hypothalamus, substantia nigra, subthalamic nucleus and thalamus.

Its subcellular location is the cytoplasm. Its function is as follows. Involved in EGFR trafficking, acting as negative regulator of endocytic EGFR internalization at the plasma membrane. The sequence is that of Ataxin-2 (ATXN2) from Homo sapiens (Human).